The chain runs to 474 residues: Magnesium transporter MRS2-A, chloroplastic (474 aa).

Residues 1–55 (MASVSSSPSYSSQAAVLLLLHQPPHQHGHGGACLRYRGSQSQGRGNAVATSLGLS) constitute a chloroplast transit peptide. The segment at 79–129 (GKDGRAVTKDEEEEAAAAAVEEEGEVEVRREEDKPGDDGSREAAARGSGSG) is disordered. Over residues 88–103 (DEEEEAAAAAVEEEGE) the composition is skewed to acidic residues. Over residues 104 to 122 (VEVRREEDKPGDDGSREAA) the composition is skewed to basic and acidic residues. Transmembrane regions (helical) follow at residues 412 to 432 (LLLQVGTFCVAIGALIAGIFG) and 444 to 464 (WAFWATTGGIVVGAVAGFFIM). The Required for magnesium transport activity signature appears at 432–434 (GMN).

Belongs to the CorA metal ion transporter (MIT) (TC 1.A.35.5) family.

It localises to the plastid. Its subcellular location is the chloroplast membrane. Magnesium transporter that may mediate the influx of magnesium in chloroplast. In Oryza sativa subsp. japonica (Rice), this protein is Magnesium transporter MRS2-A, chloroplastic (MRS2-A).